A 345-amino-acid polypeptide reads, in one-letter code: Anthranilate phosphoribosyltransferase (345 aa).

5-phospho-alpha-D-ribose 1-diphosphate contacts are provided by residues Gly79, 82–83 (GD), Thr87, 89–92 (NVST), 106–114 (KHGNRAVSG), and Ser118. Gly79 is a binding site for anthranilate. Ser91 serves as a coordination point for Mg(2+). Anthranilate is bound at residue Asn109. Residue Arg164 coordinates anthranilate. Asp223 and Glu224 together coordinate Mg(2+).

The protein belongs to the anthranilate phosphoribosyltransferase family. As to quaternary structure, homodimer. Mg(2+) is required as a cofactor.

It catalyses the reaction N-(5-phospho-beta-D-ribosyl)anthranilate + diphosphate = 5-phospho-alpha-D-ribose 1-diphosphate + anthranilate. It participates in amino-acid biosynthesis; L-tryptophan biosynthesis; L-tryptophan from chorismate: step 2/5. Functionally, catalyzes the transfer of the phosphoribosyl group of 5-phosphorylribose-1-pyrophosphate (PRPP) to anthranilate to yield N-(5'-phosphoribosyl)-anthranilate (PRA). The protein is Anthranilate phosphoribosyltransferase of Sulfurisphaera tokodaii (strain DSM 16993 / JCM 10545 / NBRC 100140 / 7) (Sulfolobus tokodaii).